Here is a 218-residue protein sequence, read N- to C-terminus: Small ribosomal subunit protein uS3 (218 aa).

The KH type-2 domain occupies 38–106; it reads IREYISKRLS…RVHINILEIK (69 aa).

Belongs to the universal ribosomal protein uS3 family. Part of the 30S ribosomal subunit. Forms a tight complex with proteins S10 and S14.

Binds the lower part of the 30S subunit head. Binds mRNA in the 70S ribosome, positioning it for translation. In Bacillus subtilis (strain 168), this protein is Small ribosomal subunit protein uS3.